The chain runs to 430 residues: Adenylosuccinate synthetase (430 aa).

GTP contacts are provided by residues 12–18 and 40–42; these read GDEGKGK and GHT. Aspartate 13 acts as the Proton acceptor in catalysis. The Mg(2+) site is built by aspartate 13 and glycine 40. Residues 13-16, 38-41, threonine 128, arginine 142, glutamine 223, threonine 238, and arginine 302 each bind IMP; these read DEGK and NAGH. Histidine 41 functions as the Proton donor in the catalytic mechanism. GTP contacts are provided by residues 330 to 332 and 412 to 414; these read SID and SVG.

The protein belongs to the adenylosuccinate synthetase family. In terms of assembly, homodimer. Mg(2+) serves as cofactor.

It is found in the cytoplasm. The enzyme catalyses IMP + L-aspartate + GTP = N(6)-(1,2-dicarboxyethyl)-AMP + GDP + phosphate + 2 H(+). Its pathway is purine metabolism; AMP biosynthesis via de novo pathway; AMP from IMP: step 1/2. Its function is as follows. Plays an important role in the de novo pathway of purine nucleotide biosynthesis. Catalyzes the first committed step in the biosynthesis of AMP from IMP. The sequence is that of Adenylosuccinate synthetase from Bacillus subtilis (strain 168).